The following is a 1175-amino-acid chain: DNA-directed RNA polymerase subunit beta (1175 aa).

Positions 12–33 (QSKTDRPQSSSNGSSSLNGSVP) are disordered. Residues 20–31 (SSSNGSSSLNGS) show a composition bias toward low complexity.

The protein belongs to the RNA polymerase beta chain family. As to quaternary structure, the RNAP catalytic core consists of 2 alpha, 1 beta, 1 beta' and 1 omega subunit. When a sigma factor is associated with the core the holoenzyme is formed, which can initiate transcription.

The enzyme catalyses RNA(n) + a ribonucleoside 5'-triphosphate = RNA(n+1) + diphosphate. Functionally, DNA-dependent RNA polymerase catalyzes the transcription of DNA into RNA using the four ribonucleoside triphosphates as substrates. The protein is DNA-directed RNA polymerase subunit beta of Mycobacterium avium (strain 104).